The sequence spans 859 residues: Suppressor protein MPT5 (859 aa).

Residues 85 to 108 form a disordered region; sequence MNNTSTSNSANSFSPNPNAASNST. Low complexity predominate over residues 86–108; it reads NNTSTSNSANSFSPNPNAASNST. The PUM-HD domain maps to 188–596; sequence DNSSFGLSSS…KIKLKVKAYA (409 aa). 8 Pumilio repeats span residues 209 to 247, 248 to 283, 284 to 320, 325 to 362, 363 to 400, 401 to 438, 439 to 474, and 503 to 539; these read PLRD…LMYE, QIKP…LLIQ, TIYP…LIIK, EFTS…FIID, AIVE…KISV, KIVQ…ELFN, RLSN…FIVN, and DIFT…AYNK. Residues 620-658 are disordered; the sequence is TINNENKNPHNKNSHNHNHNHNHNHAHNNNNNNNQKSHT. Residues 628 to 645 show a composition bias toward basic residues; it reads PHNKNSHNHNHNHNHNHA. A phosphoserine mark is found at Ser-662, Ser-834, and Ser-838.

It is found in the cytoplasm. In terms of biological role, RNA-binding protein involved in post-transcriptional regulation. Negatively regulates expression of HO by binding to the 3'-UTR of HO mRNA. Predominantly binds to mRNAs encoding chromatin modifiers and spindle pole body components. Recognizes and binds to 5'-TGTAA[CT]A[AT]TA-3' in the 3'-UTR of target mRNAs. Multicopy suppressor of POP2 mutation. Required for high temperature growth. In Saccharomyces cerevisiae (strain ATCC 204508 / S288c) (Baker's yeast), this protein is Suppressor protein MPT5 (MPT5).